Consider the following 118-residue polypeptide: MTISELLQYCMAKPGAEQSVHNDWKATQIKVEDVLFAMVKEVENRPAVSLKTSPELAELLRQQHSDVRPSRHLNKAHWSTVYLDGSLPDSQIYYLVDASYQQAVNLLPEEKRKLLVQL.

This is an uncharacterized protein from Escherichia coli O157:H7.